The sequence spans 1322 residues: Flocculation protein FLO9 (1322 aa).

Residues 1 to 24 (MSLAHYCLLLAIVTLLGLTNVVSA) form the signal peptide. The PA14 domain maps to 74-249 (GGQTDISIDY…GTTVSDDFEG (176 aa)). N-linked (GlcNAc...) asparagine glycans are attached at residues asparagine 135, asparagine 187, asparagine 203, asparagine 257, asparagine 262, and asparagine 270. The sugar recognition stretch occupies residues 197-240 (NGSPPDNITGTVYMYAGFYYPMKIVYSNAVAWGTLPISVTLPDG). 13 consecutive repeat copies span residues 278-322 (TTTE…STII), 323-367 (TTTE…TTAI), 368-412 (TTTE…TTAM), 413-457 (TTTQ…TTAM), 458-502 (TTTQ…TTAM), 503-547 (TTTQ…TTAM), 548-592 (TTTQ…TTAI), 593-637 (TTTE…TTAI), 638-682 (TTTQ…TTAM), 683-727 (TTTQ…TTAM), 728-772 (TTTQ…GLIS), 773-817 (TTTE…GLVT), and 818-862 (TTTE…ISSS). The 13 X 45 AA approximate tandem repeats, Thr-rich stretch occupies residues 278 to 862 (TTTEPWTGTF…KTPTTAISSS (585 aa)). N-linked (GlcNAc...) asparagine glycosylation occurs at asparagine 329. Residues asparagine 419, asparagine 464, asparagine 509, asparagine 554, asparagine 599, asparagine 644, asparagine 689, and asparagine 734 are each glycosylated (N-linked (GlcNAc...) asparagine). 2 disordered regions span residues 770–799 (LIST…NGQP) and 816–843 (VTTT…TNGQ). Composition is skewed to low complexity over residues 773 to 795 (TTTE…VTGT) and 817 to 840 (TTTT…ITGT). Asparagine 888 is a glycosylation site (N-linked (GlcNAc...) asparagine). Tandem repeats lie at residues 892 to 906 (VISS…TSSL), 907 to 921 (VISS…TSSP), and 922 to 936 (VISS…ISST). Residues 892-936 (VISSSVISSSDTSSLVISSSVTSSLVTSSPVISSSFISSPVISST) are 3 X 15 AA approximate repeats, Ser-rich. Residues 950-1001 (SVIPTSSSTSGSSESETGSASSASSSSSISSESPKSTYSSSSLPPVTSATTS) are compositionally biased toward low complexity. A disordered region spans residues 950–1018 (SVIPTSSSTS…PPVTTTKTSE (69 aa)). The segment covering 1002-1018 (QEITSSLPPVTTTKTSE) has biased composition (polar residues). 3 consecutive repeat copies span residues 1013 to 1063 (TTKT…CPIS), 1085 to 1135 (TTET…CPIS), and 1136 to 1186 (TTES…RPQT). The interval 1013–1186 (TTKTSEQTTL…TVYSTWRPQT (174 aa)) is 3 X 51 AA approximate repeats, Thr-rich. Positions 1186–1196 (TTNEQSVSSKM) are enriched in polar residues. Disordered stretches follow at residues 1186-1221 (TTNE…AAET) and 1256-1284 (SETG…ASSM). Low complexity predominate over residues 1197-1221 (NSATSETTTNTGAAETTTSTGAAET). Residues 1257–1284 (ETGNTKSLTSSGLSTMSQQPRSTPASSM) show a composition bias toward polar residues. A lipid anchor (GPI-anchor amidated glycine) is attached at glycine 1299. Positions 1300-1322 (SANSLLAGSGLSVFIASLLLAII) are cleaved as a propeptide — removed in mature form.

The protein belongs to the flocculin family. Post-translationally, the GPI-anchor is attached to the protein in the endoplasmic reticulum and serves to target the protein to the cell surface. There, the glucosamine-inositol phospholipid moiety is cleaved off and the GPI-modified mannoprotein is covalently attached via its lipidless GPI glycan remnant to the 1,6-beta-glucan of the outer cell wall layer.

It is found in the secreted. The protein resides in the cell wall. The protein localises to the membrane. Its function is as follows. Cell wall protein that participates directly in adhesive cell-cell interactions during yeast flocculation, a reversible, asexual and Ca(2+)-dependent process in which cells adhere to form aggregates (flocs) consisting of thousands of cells. The lectin-like protein sticks out of the cell wall of flocculent cells and selectively binds mannose residues in the cell walls of adjacent cells. The polypeptide is Flocculation protein FLO9 (FLO9) (Saccharomyces cerevisiae (strain ATCC 204508 / S288c) (Baker's yeast)).